Here is a 332-residue protein sequence, read N- to C-terminus: MGVIKKKRSHHGKASRQQYYSGVQVGGVGSMGAINNNIPSLTSFAEENNYQYGYSGSSAGMNGRSLTYAQQQLNKQRQDFERVRLRPEQLSNIIHDESDTISFRSNLLKNFISSNDAFNMLSLTTVPCDRIEKSRLFSEKTIRYLMQKQHEMKTQAAELQEKPLTPLKYTKLIAAAEDGSRSTKDMIDAVFEQDSHLRYQPDGVVVHRDDPALVGKLRGDLREAPADYWTHAYRDVLAQYHEAKERIRQKEVTAGEAQDEASLQQQQQQDLQQQQQVVTTVASQSPHATATEKEPVPAVVDDPLENMFGDYSNEPFNTNFDDEFGDLDAVFF.

The short motif at 2–8 (GVIKKKR) is the Nuclear localization signal element. Threonine 165 is modified (phosphothreonine). The interval 278–299 (VTTVASQSPHATATEKEPVPAV) is disordered.

In terms of assembly, component of the SWI/SNF global transcription activator complex. The 1.14 MDa SWI/SNF complex is composed of 11 different subunits: one copy each of SWI1, SNF2/SWI2, SNF5, SNF12/SWP73, ARP7/SWP61, ARP9/SWP59; two copies each of SWI3, SNF6, SNF11, SWP82; and three copies of TAF14/SWP29.

Its subcellular location is the nucleus. Its function is as follows. Involved in transcriptional activation. Component of the SWI/SNF complex, an ATP-dependent chromatin remodeling complex, which is required for the positive and negative regulation of gene expression of a large number of genes. It changes chromatin structure by altering DNA-histone contacts within a nucleosome, leading eventually to a change in nucleosome position, thus facilitating or repressing binding of gene-specific transcription factors. The polypeptide is Transcription regulatory protein SNF6 (SNF6) (Saccharomyces cerevisiae (strain ATCC 204508 / S288c) (Baker's yeast)).